We begin with the raw amino-acid sequence, 322 residues long: MTALQPYTIPSQDDRQSVLADKIKRLREERNAIILAHYYTVPEIQQVADVVGDSLALARAAETTDADVIVFAGVYFMGETAKILNPGKTVLMPDNSAGCPLADSCPADRFRSFREQYPDALVISYINSTAEIKAESDIICTSSNAVDIVSQIPSDKRIIFGPDRNLGSYVMQQLEREMILWQGFCYVHESYSWDVIETAVRQFPDAQLIAHPECRREVLDHADFVGSTGALLAYSQKSPADAFIVATEPGILYEMKKRSPEKSFIAAPKDIVSSQSVCSQMKQNTMENLCNCLETMAPQIVVDETLAAGALKSIRKMLEMSK.

Iminosuccinate contacts are provided by His-37 and Ser-54. Cys-99 contacts [4Fe-4S] cluster. Residues Tyr-125–Asn-127 and Ser-142 contribute to the iminosuccinate site. Cys-185 contacts [4Fe-4S] cluster. Residues His-211–Glu-213 and Thr-228 contribute to the iminosuccinate site. Residue Cys-278 participates in [4Fe-4S] cluster binding.

Belongs to the quinolinate synthase family. Type 2 subfamily. [4Fe-4S] cluster is required as a cofactor.

The protein resides in the cytoplasm. The catalysed reaction is iminosuccinate + dihydroxyacetone phosphate = quinolinate + phosphate + 2 H2O + H(+). It functions in the pathway cofactor biosynthesis; NAD(+) biosynthesis; quinolinate from iminoaspartate: step 1/1. Its function is as follows. Catalyzes the condensation of iminoaspartate with dihydroxyacetone phosphate to form quinolinate. This Prosthecochloris aestuarii (strain DSM 271 / SK 413) protein is Quinolinate synthase.